The primary structure comprises 514 residues: Cobyric acid synthase (514 aa).

Positions 258-458 constitute a GATase cobBQ-type domain; sequence ALMVGVVRLP…IHGIFDNDGL (201 aa). The Nucleophile role is filled by C339. Residue H450 is part of the active site.

Belongs to the CobB/CobQ family. CobQ subfamily.

It participates in cofactor biosynthesis; adenosylcobalamin biosynthesis. In terms of biological role, catalyzes amidations at positions B, D, E, and G on adenosylcobyrinic A,C-diamide. NH(2) groups are provided by glutamine, and one molecule of ATP is hydrogenolyzed for each amidation. This Syntrophobacter fumaroxidans (strain DSM 10017 / MPOB) protein is Cobyric acid synthase.